Consider the following 146-residue polypeptide: Probable U6 snRNA-associated Sm-like protein LSm4 (146 aa).

The 74-residue stretch at L2–V75 folds into the Sm domain. A compositionally biased stretch (basic and acidic residues) spans Q80–P91. The tract at residues Q80 to G146 is disordered. The segment covering G137 to G146 has biased composition (gly residues).

The protein belongs to the snRNP Sm proteins family. LSm subunits form a heteromer with a doughnut shape.

It is found in the nucleus. Binds specifically to the 3'-terminal U-tract of U6 snRNA. The chain is Probable U6 snRNA-associated Sm-like protein LSm4 from Nicotiana tabacum (Common tobacco).